We begin with the raw amino-acid sequence, 135 residues long: MLSPKRTRFRKQHRGRMKGISYRGNYICFGRYALQALEPAWITSRQIEAGRRAMTRYARRGGKIWVRIFPDKPVTVRPTETRMGSGKGSPEYWVSVVKPGRILYEMGGVSETVARAAIEIAACKMPIRTQFVIAG.

This sequence belongs to the universal ribosomal protein uL16 family. Part of the 50S ribosomal subunit.

Its subcellular location is the plastid. The protein resides in the chloroplast. The sequence is that of Large ribosomal subunit protein uL16c from Drimys granadensis.